The sequence spans 177 residues: Ferritin light chain, oocyte isoform (177 aa).

Positions Gln-9–Lys-158 constitute a Ferritin-like diiron domain. The Fe cation site is built by Glu-26, His-64, and Glu-106.

It belongs to the ferritin family. In terms of assembly, oligomer of 24 subunits. There are two types of subunits: L (light) chain and H (heavy) chain. The functional molecule is roughly spherical and contains a central cavity into which the insoluble mineral iron core is deposited.

Functionally, stores iron in a soluble, non-toxic, readily available form. Important for iron homeostasis. Iron is taken up in the ferrous form and deposited as ferric hydroxides after oxidation. The protein is Ferritin light chain, oocyte isoform of Xenopus laevis (African clawed frog).